Reading from the N-terminus, the 620-residue chain is Chaperone protein HscA homolog (620 aa).

It belongs to the heat shock protein 70 family.

Functionally, chaperone involved in the maturation of iron-sulfur cluster-containing proteins. Has a low intrinsic ATPase activity which is markedly stimulated by HscB. The protein is Chaperone protein HscA homolog of Shewanella loihica (strain ATCC BAA-1088 / PV-4).